The primary structure comprises 342 residues: Methionyl-tRNA formyltransferase (342 aa).

Position 108-111 (108-111 (SLLP)) interacts with (6S)-5,6,7,8-tetrahydrofolate.

It belongs to the Fmt family.

The catalysed reaction is L-methionyl-tRNA(fMet) + (6R)-10-formyltetrahydrofolate = N-formyl-L-methionyl-tRNA(fMet) + (6S)-5,6,7,8-tetrahydrofolate + H(+). Its function is as follows. Attaches a formyl group to the free amino group of methionyl-tRNA(fMet). The formyl group appears to play a dual role in the initiator identity of N-formylmethionyl-tRNA by promoting its recognition by IF2 and preventing the misappropriation of this tRNA by the elongation apparatus. The protein is Methionyl-tRNA formyltransferase of Prochlorococcus marinus (strain MIT 9313).